Here is a 170-residue protein sequence, read N- to C-terminus: MFKILQYPDPRLKTAAQRVEKFDDALQKMIDEMFETHYAATNCAALAATQLDMENPKHITVIDFSPNKDQPLCLVNAEIIERSGEHTEEEGCMSVGGGTFEKVTRAAKIKVRARDRYGKPVEFEADGFMAKCIQHELDHLNGIIFLDRLSTLKRGRIDKRLGKLRRQGKV.

The Fe cation site is built by C92 and H135. The active site involves E136. H139 serves as a coordination point for Fe cation.

Belongs to the polypeptide deformylase family. Fe(2+) serves as cofactor.

The enzyme catalyses N-terminal N-formyl-L-methionyl-[peptide] + H2O = N-terminal L-methionyl-[peptide] + formate. Its function is as follows. Removes the formyl group from the N-terminal Met of newly synthesized proteins. Requires at least a dipeptide for an efficient rate of reaction. N-terminal L-methionine is a prerequisite for activity but the enzyme has broad specificity at other positions. This Coxiella burnetii (strain RSA 493 / Nine Mile phase I) protein is Peptide deformylase 1.